Here is a 165-residue protein sequence, read N- to C-terminus: MKTPRLPIAIQQAVMRRLRENLAQANLKLDRHYPEPKLVYTQRGTSAGTAWLESYEIRLNPVLLLENIDTFIAEVVPHELTHLLVWKHFGRKAPHGKEWKWMMESVLGVPARRTHQFALQSVRRNTFPYHCQCQQHQLTVRRHNRVVRGEAVYRCVHCGEPLVAG.

Residues Leu-22–Val-163 form the SprT-like domain. His-78 contributes to the Zn(2+) binding site. Glu-79 is a catalytic residue. Residue His-82 coordinates Zn(2+).

Belongs to the SprT family. It depends on Zn(2+) as a cofactor.

It localises to the cytoplasm. The polypeptide is Protein SprT (Salmonella paratyphi A (strain ATCC 9150 / SARB42)).